A 380-amino-acid polypeptide reads, in one-letter code: Probable pectin lyase A (380 aa).

An N-terminal signal peptide occupies residues 1 to 20; it reads MRYTSLFTAVTAALASTAAA. Intrachain disulfides connect Cys83–Cys102 and Cys92–Cys226. N-linked (GlcNAc...) asparagine glycosylation is present at Asn129. The active site involves Arg256. Residues Cys323 and Cys331 are joined by a disulfide bond.

This sequence belongs to the polysaccharide lyase 1 family.

It is found in the secreted. It catalyses the reaction Eliminative cleavage of (1-&gt;4)-alpha-D-galacturonan methyl ester to give oligosaccharides with 4-deoxy-6-O-methyl-alpha-D-galact-4-enuronosyl groups at their non-reducing ends.. Pectinolytic enzymes consist of four classes of enzymes: pectin lyase, polygalacturonase, pectin methylesterase and rhamnogalacturonase. Among pectinolytic enzymes, pectin lyase is the most important in depolymerization of pectin, since it cleaves internal glycosidic bonds of highly methylated pectins. The polypeptide is Probable pectin lyase A (pelA) (Aspergillus fumigatus (strain ATCC MYA-4609 / CBS 101355 / FGSC A1100 / Af293) (Neosartorya fumigata)).